The following is a 94-amino-acid chain: Integration host factor subunit beta (94 aa).

The protein belongs to the bacterial histone-like protein family. In terms of assembly, heterodimer of an alpha and a beta chain.

Its function is as follows. This protein is one of the two subunits of integration host factor, a specific DNA-binding protein that functions in genetic recombination as well as in transcriptional and translational control. The sequence is that of Integration host factor subunit beta from Buchnera aphidicola subsp. Acyrthosiphon pisum (strain 5A).